We begin with the raw amino-acid sequence, 80 residues long: Anaphase-promoting complex subunit hcn1 (80 aa).

Met1 carries the N-acetylmethionine modification. Positions 26-54 are disordered; sequence QTLDSESTTEEALQKNEESTRLSPEKKKI. Basic and acidic residues predominate over residues 37–54; it reads ALQKNEESTRLSPEKKKI.

The APC/C is composed of at least 13 subunits: apc1, apc2, nuc2, apc4, apc5, cut9, apc8, apc10, apc11, hcn1, apc13, apc14 and apc15. Interacts directly (via N-terminus) with cut9.

Component of the anaphase promoting complex/cyclosome (APC/C), a cell cycle-regulated E3 ubiquitin-protein ligase complex that controls progression through mitosis and the G1 phase of the cell cycle. The APC/C is thought to confer substrate specificity and, in the presence of ubiquitin-conjugating E2 enzymes, it catalyzes the formation of protein-ubiquitin conjugates that are subsequently degraded by the 26S proteasome. Has a role in assembling cut9 in the 20S APC/cyclosome. This is Anaphase-promoting complex subunit hcn1 (hcn1) from Schizosaccharomyces pombe (strain 972 / ATCC 24843) (Fission yeast).